Consider the following 224-residue polypeptide: Phosphoribosylformylglycinamidine synthase subunit PurQ (224 aa).

Residues 2 to 224 (TVAIIRFGGS…DGQGVLEGFR (223 aa)) enclose the Glutamine amidotransferase type-1 domain. The active-site Nucleophile is cysteine 85. Residues histidine 202 and glutamate 204 contribute to the active site. A disordered region spans residues 204–224 (ERASLPDIGPTDGQGVLEGFR).

Part of the FGAM synthase complex composed of 1 PurL, 1 PurQ and 2 PurS subunits.

Its subcellular location is the cytoplasm. It carries out the reaction N(2)-formyl-N(1)-(5-phospho-beta-D-ribosyl)glycinamide + L-glutamine + ATP + H2O = 2-formamido-N(1)-(5-O-phospho-beta-D-ribosyl)acetamidine + L-glutamate + ADP + phosphate + H(+). The catalysed reaction is L-glutamine + H2O = L-glutamate + NH4(+). The protein operates within purine metabolism; IMP biosynthesis via de novo pathway; 5-amino-1-(5-phospho-D-ribosyl)imidazole from N(2)-formyl-N(1)-(5-phospho-D-ribosyl)glycinamide: step 1/2. In terms of biological role, part of the phosphoribosylformylglycinamidine synthase complex involved in the purines biosynthetic pathway. Catalyzes the ATP-dependent conversion of formylglycinamide ribonucleotide (FGAR) and glutamine to yield formylglycinamidine ribonucleotide (FGAM) and glutamate. The FGAM synthase complex is composed of three subunits. PurQ produces an ammonia molecule by converting glutamine to glutamate. PurL transfers the ammonia molecule to FGAR to form FGAM in an ATP-dependent manner. PurS interacts with PurQ and PurL and is thought to assist in the transfer of the ammonia molecule from PurQ to PurL. This Natronomonas pharaonis (strain ATCC 35678 / DSM 2160 / CIP 103997 / JCM 8858 / NBRC 14720 / NCIMB 2260 / Gabara) (Halobacterium pharaonis) protein is Phosphoribosylformylglycinamidine synthase subunit PurQ.